Reading from the N-terminus, the 143-residue chain is Large ribosomal subunit protein uL11 (143 aa).

Belongs to the universal ribosomal protein uL11 family. In terms of assembly, part of the ribosomal stalk of the 50S ribosomal subunit. Interacts with L10 and the large rRNA to form the base of the stalk. L10 forms an elongated spine to which L12 dimers bind in a sequential fashion forming a multimeric L10(L12)X complex. Post-translationally, one or more lysine residues are methylated.

In terms of biological role, forms part of the ribosomal stalk which helps the ribosome interact with GTP-bound translation factors. This Pseudomonas entomophila (strain L48) protein is Large ribosomal subunit protein uL11.